The primary structure comprises 102 residues: Putative RNA-binding protein RbpA (102 aa).

An RRM domain is found at 2–79 (SIYVGNLSYE…RDLKVNKAKP (78 aa)). Positions 73–84 (KVNKAKPREDRG) are enriched in basic and acidic residues. The segment at 73–102 (KVNKAKPREDRGPSGGNRGGYGGGGGRNRY) is disordered. Positions 85–102 (PSGGNRGGYGGGGGRNRY) are enriched in gly residues.

In Nostoc sp. (strain PCC 7120 / SAG 25.82 / UTEX 2576), this protein is Putative RNA-binding protein RbpA (rbpA).